We begin with the raw amino-acid sequence, 132 residues long: Pro-MCH 1 (132 aa).

The first 24 residues, 1–24, serve as a signal peptide directing secretion; that stretch reads MRDSVLSVIFALALFLECYTPSMA. Cys120 and Cys129 are oxidised to a cystine.

It belongs to the MCH family. As to expression, pituitary gland. Produced in neurons of lateral basal hypothalamus which project both to the brain and to the neural lobe of the pituitary gland from where MCH is released.

Its function is as follows. Plays a role in skin pigmentation by antagonizing the action of melanotropin alpha. Induces melanin concentration within the melanophores. May participate in the control of the hypothalamo-pituitary adrenal gland axis by inhibiting the release of ACTH. The polypeptide is Pro-MCH 1 (mch1) (Oncorhynchus kisutch (Coho salmon)).